A 655-amino-acid polypeptide reads, in one-letter code: Alpha-amylase (655 aa).

Glu-123 (nucleophile) is an active-site residue. Catalysis depends on Asp-214, which acts as the Proton donor.

This sequence belongs to the glycosyl hydrolase 57 family.

The catalysed reaction is Endohydrolysis of (1-&gt;4)-alpha-D-glucosidic linkages in polysaccharides containing three or more (1-&gt;4)-alpha-linked D-glucose units.. The protein is Alpha-amylase (amyA) of Pyrococcus abyssi (strain GE5 / Orsay).